The sequence spans 248 residues: 1-(5-phosphoribosyl)-5-[(5-phosphoribosylamino)methylideneamino] imidazole-4-carboxamide isomerase (248 aa).

Asp-17 acts as the Proton acceptor in catalysis. The active-site Proton donor is the Asp-136.

This sequence belongs to the HisA/HisF family.

The protein resides in the cytoplasm. The catalysed reaction is 1-(5-phospho-beta-D-ribosyl)-5-[(5-phospho-beta-D-ribosylamino)methylideneamino]imidazole-4-carboxamide = 5-[(5-phospho-1-deoxy-D-ribulos-1-ylimino)methylamino]-1-(5-phospho-beta-D-ribosyl)imidazole-4-carboxamide. The protein operates within amino-acid biosynthesis; L-histidine biosynthesis; L-histidine from 5-phospho-alpha-D-ribose 1-diphosphate: step 4/9. This Arthrobacter sp. (strain FB24) protein is 1-(5-phosphoribosyl)-5-[(5-phosphoribosylamino)methylideneamino] imidazole-4-carboxamide isomerase.